A 313-amino-acid chain; its full sequence is Acetyl-coenzyme A carboxylase carboxyl transferase subunit alpha (313 aa).

The region spanning 36 to 286 (RLDKEVKTIY…KEYFLDTLRT (251 aa)) is the CoA carboxyltransferase C-terminal domain.

It belongs to the AccA family. Acetyl-CoA carboxylase is a heterohexamer composed of biotin carboxyl carrier protein (AccB), biotin carboxylase (AccC) and two subunits each of ACCase subunit alpha (AccA) and ACCase subunit beta (AccD).

Its subcellular location is the cytoplasm. The catalysed reaction is N(6)-carboxybiotinyl-L-lysyl-[protein] + acetyl-CoA = N(6)-biotinyl-L-lysyl-[protein] + malonyl-CoA. Its pathway is lipid metabolism; malonyl-CoA biosynthesis; malonyl-CoA from acetyl-CoA: step 1/1. Component of the acetyl coenzyme A carboxylase (ACC) complex. First, biotin carboxylase catalyzes the carboxylation of biotin on its carrier protein (BCCP) and then the CO(2) group is transferred by the carboxyltransferase to acetyl-CoA to form malonyl-CoA. In Helicobacter acinonychis (strain Sheeba), this protein is Acetyl-coenzyme A carboxylase carboxyl transferase subunit alpha.